Reading from the N-terminus, the 220-residue chain is UPF0758 protein Asuc_0013 (220 aa).

Residues 98-220 enclose the MPN domain; that stretch reads EFTNPLTVRL…YFSFAEQDWL (123 aa). The Zn(2+) site is built by His169, His171, and Asp182. Positions 169 to 182 match the JAMM motif motif; the sequence is HNHPSGSAEPSASD.

It belongs to the UPF0758 family.

This Actinobacillus succinogenes (strain ATCC 55618 / DSM 22257 / CCUG 43843 / 130Z) protein is UPF0758 protein Asuc_0013.